Reading from the N-terminus, the 114-residue chain is Kininogen-2 (114 aa).

An N-terminal signal peptide occupies residues 1–23; the sequence is MRLWFCLSFFIVLCLEHFPGTLA. Over residues 35–45 the composition is skewed to basic residues; sequence TRLHGHHKPSR. The interval 35-114 is disordered; it reads TRLHGHHKPS…QIPGLGPLRG (80 aa). The segment covering 65–80 has biased composition (basic and acidic residues); it reads PESEEKTEQFLRDLPK. The residue at position 113 (arginine 113) is an Arginine amide.

Belongs to the bradykinin-related peptide family. Expressed by the skin glands.

Its subcellular location is the secreted. Potent vasodilator. Binds B1 (BDKRB1) and B2 (BDKRB2) bradykinin receptors. This chain is Kininogen-2, found in Bombina maxima (Giant fire-bellied toad).